A 285-amino-acid polypeptide reads, in one-letter code: MKVLLATALVSLLPFSSAVECSKNEILNKYRVNEFSIGGVSVQDTPPSETKESWWLNICDEHDSKSSIPDQCNVKDIFCGVTSVALPGKESIVTKVMDFTSSVALEVKETAEALSIRLSGAAWGSHILNADIYLQCQEKGSGSLTESSWTDDQNVKLVFSGPFGCLKKGNDNKDGNGDDDNNDKDGDDSDKKPHDGDKNGSKPKGGAGLGSWLVWLFMYATIFALIYLVVTSYMNTRNGSFNDFREEFVDRSTTFATNLPQFAKEVAGKIVNSGSSSQRGGYSAV.

The signal sequence occupies residues 1–18 (MKVLLATALVSLLPFSSA). The 149-residue stretch at 19 to 167 (VECSKNEILN…VFSGPFGCLK (149 aa)) folds into the MRH domain. Residues 19 to 209 (VECSKNEILN…GSKPKGGAGL (191 aa)) are Lumenal-facing. 3 disulfide bridges follow: cysteine 21-cysteine 59, cysteine 72-cysteine 79, and cysteine 136-cysteine 165. The segment at 168–204 (KGNDNKDGNGDDDNNDKDGDDSDKKPHDGDKNGSKPK) is disordered. The segment covering 177-188 (GDDDNNDKDGDD) has biased composition (acidic residues). Basic and acidic residues predominate over residues 189 to 200 (SDKKPHDGDKNG). N-linked (GlcNAc...) asparagine glycosylation is present at asparagine 199. A helical membrane pass occupies residues 210-230 (GSWLVWLFMYATIFALIYLVV). Residues 231–285 (TSYMNTRNGSFNDFREEFVDRSTTFATNLPQFAKEVAGKIVNSGSSSQRGGYSAV) are Cytoplasmic-facing.

The protein belongs to the ATG27 family.

Its subcellular location is the cytoplasmic vesicle membrane. The protein resides in the golgi apparatus membrane. The protein localises to the mitochondrion membrane. It localises to the preautophagosomal structure membrane. Effector of VPS34 phosphatidylinositol 3-phosphate kinase signaling. Regulates the cytoplasm to vacuole transport (Cvt) vesicle formation. Plays a role in ATG protein retrieval from the pre-autophagosomal structure (PAS) and is especially required for autophagy-dependent cycling of ATG9. The protein is Autophagy-related protein 27 (ATG27) of Kluyveromyces lactis (strain ATCC 8585 / CBS 2359 / DSM 70799 / NBRC 1267 / NRRL Y-1140 / WM37) (Yeast).